We begin with the raw amino-acid sequence, 520 residues long: GMP synthase [glutamine-hydrolyzing] (520 aa).

In terms of domain architecture, Glutamine amidotransferase type-1 spans 12–205 (KIIVLDYGSQ…AISICGARGD (194 aa)). The Nucleophile role is filled by Cys89. Catalysis depends on residues His179 and Glu181. Residues 206 to 395 (WSMDNFIDME…LGMPEEIVWR (190 aa)) form the GMPS ATP-PPase domain. Position 233–239 (233–239 (SGGVDSS)) interacts with ATP.

As to quaternary structure, homodimer.

The catalysed reaction is XMP + L-glutamine + ATP + H2O = GMP + L-glutamate + AMP + diphosphate + 2 H(+). It functions in the pathway purine metabolism; GMP biosynthesis; GMP from XMP (L-Gln route): step 1/1. Catalyzes the synthesis of GMP from XMP. The sequence is that of GMP synthase [glutamine-hydrolyzing] from Streptococcus pyogenes serotype M6 (strain ATCC BAA-946 / MGAS10394).